We begin with the raw amino-acid sequence, 325 residues long: Elongation factor P--(R)-beta-lysine ligase (325 aa).

76–78 (SPE) is a substrate binding site. Residues 100–102 (RNE) and asparagine 109 contribute to the ATP site. Residue tyrosine 118 participates in substrate binding. 244 to 245 (EL) is an ATP binding site. Glutamate 251 contributes to the substrate binding site. Glycine 300 lines the ATP pocket.

It belongs to the class-II aminoacyl-tRNA synthetase family. EpmA subfamily. In terms of assembly, homodimer.

The catalysed reaction is D-beta-lysine + L-lysyl-[protein] + ATP = N(6)-((3R)-3,6-diaminohexanoyl)-L-lysyl-[protein] + AMP + diphosphate + H(+). With EpmB is involved in the beta-lysylation step of the post-translational modification of translation elongation factor P (EF-P) on 'Lys-34'. Catalyzes the ATP-dependent activation of (R)-beta-lysine produced by EpmB, forming a lysyl-adenylate, from which the beta-lysyl moiety is then transferred to the epsilon-amino group of EF-P 'Lys-34'. The sequence is that of Elongation factor P--(R)-beta-lysine ligase from Salmonella agona (strain SL483).